Here is a 356-residue protein sequence, read N- to C-terminus: Cdc42 effector protein 4 (356 aa).

Lys-5 is modified (N6-methyllysine). Position 18 is a phosphoserine (Ser-18). A CRIB domain is found at 27 to 41; it reads ISAPLGDFRHTMHVG. Positions 51 to 102 are disordered; the sequence is SFLNSKAGEPDGESLDEQPSSSSSKRSLLSRKFRGSKRSQSVTRGEREQRDM. The residue at position 64 (Ser-64) is a Phosphoserine. A compositionally biased stretch (basic residues) spans 78 to 87; that stretch reads LLSRKFRGSK. A phosphoserine mark is found at Ser-105, Ser-109, and Ser-118. Disordered regions lie at residues 122–182 and 257–356; these read LNEK…LDEQ and VAAP…EIRV. Over residues 123–132 the composition is skewed to basic and acidic residues; sequence NEKEAAEKGT. Over residues 133 to 143 the composition is skewed to low complexity; sequence SKLPKSLSSSP. Ser-138, Ser-140, Ser-142, Ser-174, Ser-292, and Ser-295 each carry phosphoserine. Over residues 287 to 315 the composition is skewed to low complexity; sequence AAAAPSPGSARSMGSHTTRDSSSLSSCTS. Over residues 318–344 the composition is skewed to basic and acidic residues; sequence LEERSPAFRGPDRARAAVSRQPDKEFS. Residues 345–356 show a composition bias toward acidic residues; the sequence is FMDEEEEDEIRV.

Belongs to the BORG/CEP family. In terms of assembly, interacts with CDC42 and RHOQ, in a GTP-dependent manner. Not detected in any of the adult tissues tested. May be expressed only in fetal or embryonic tissues.

Its subcellular location is the endomembrane system. The protein resides in the cytoplasm. It localises to the cytoskeleton. Functionally, probably involved in the organization of the actin cytoskeleton. May act downstream of CDC42 to induce actin filament assembly leading to cell shape changes. Induces pseudopodia formation, when overexpressed in fibroblasts. This is Cdc42 effector protein 4 (CDC42EP4) from Homo sapiens (Human).